Here is a 313-residue protein sequence, read N- to C-terminus: tRNA dimethylallyltransferase (313 aa).

10 to 17 (GPTAVGKT) is an ATP binding site. 12 to 17 (TAVGKT) provides a ligand contact to substrate. Positions 35–38 (DSMQ) are interaction with substrate tRNA.

It belongs to the IPP transferase family. Monomer. Mg(2+) is required as a cofactor.

The enzyme catalyses adenosine(37) in tRNA + dimethylallyl diphosphate = N(6)-dimethylallyladenosine(37) in tRNA + diphosphate. Functionally, catalyzes the transfer of a dimethylallyl group onto the adenine at position 37 in tRNAs that read codons beginning with uridine, leading to the formation of N6-(dimethylallyl)adenosine (i(6)A). This chain is tRNA dimethylallyltransferase, found in Alkaliphilus oremlandii (strain OhILAs) (Clostridium oremlandii (strain OhILAs)).